Here is a 150-residue protein sequence, read N- to C-terminus: 3-hydroxyacyl-[acyl-carrier-protein] dehydratase FabZ (150 aa).

Histidine 57 is a catalytic residue.

The protein belongs to the thioester dehydratase family. FabZ subfamily.

Its subcellular location is the cytoplasm. It carries out the reaction a (3R)-hydroxyacyl-[ACP] = a (2E)-enoyl-[ACP] + H2O. Its function is as follows. Involved in unsaturated fatty acids biosynthesis. Catalyzes the dehydration of short chain beta-hydroxyacyl-ACPs and long chain saturated and unsaturated beta-hydroxyacyl-ACPs. This chain is 3-hydroxyacyl-[acyl-carrier-protein] dehydratase FabZ, found in Actinobacillus succinogenes (strain ATCC 55618 / DSM 22257 / CCUG 43843 / 130Z).